Consider the following 262-residue polypeptide: Acyl-[acyl-carrier-protein]--UDP-N-acetylglucosamine O-acyltransferase (262 aa).

The protein belongs to the transferase hexapeptide repeat family. LpxA subfamily. In terms of assembly, homotrimer.

It localises to the cytoplasm. It carries out the reaction a (3R)-hydroxyacyl-[ACP] + UDP-N-acetyl-alpha-D-glucosamine = a UDP-3-O-[(3R)-3-hydroxyacyl]-N-acetyl-alpha-D-glucosamine + holo-[ACP]. It participates in glycolipid biosynthesis; lipid IV(A) biosynthesis; lipid IV(A) from (3R)-3-hydroxytetradecanoyl-[acyl-carrier-protein] and UDP-N-acetyl-alpha-D-glucosamine: step 1/6. Involved in the biosynthesis of lipid A, a phosphorylated glycolipid that anchors the lipopolysaccharide to the outer membrane of the cell. The chain is Acyl-[acyl-carrier-protein]--UDP-N-acetylglucosamine O-acyltransferase from Vibrio atlanticus (strain LGP32) (Vibrio splendidus (strain Mel32)).